The sequence spans 406 residues: NAC transcription factor NAM-B1 (406 aa).

The segment covering 1–11 (MGSPDSSSGSA) has biased composition (polar residues). The tract at residues 1–40 (MGSPDSSSGSAQKPPRHQHQHQPPPPRRQGSAPELPPGFR) is disordered. An NAC domain is found at 35–204 (LPPGFRFHPT…DWVLCRIYKK (170 aa)). A DNA-binding region spans residues 137-210 (VGVKKALVFY…IYKKTSKAAA (74 aa)).

Its subcellular location is the nucleus. Transcription factor of the NAC family associated with the grain protein content (GPC). Sequences of the 11 European varieties of H.vulgare tested belongs to the same haplotype while the sequence found in H.spontaneum, an ancestor of the cultivated H.vulgare which has a higher GPC, belongs to an other haplotype. The chain is NAC transcription factor NAM-B1 (NAM-B1) from Hordeum vulgare subsp. spontaneum (Wild barley).